The primary structure comprises 209 residues: Uracil phosphoribosyltransferase (209 aa).

5-phospho-alpha-D-ribose 1-diphosphate contacts are provided by residues R79, R104, and 131–139 (DPMLATGVS). Uracil is bound by residues I194 and 199–201 (GDA). Residue D200 coordinates 5-phospho-alpha-D-ribose 1-diphosphate.

It belongs to the UPRTase family. Requires Mg(2+) as cofactor.

It carries out the reaction UMP + diphosphate = 5-phospho-alpha-D-ribose 1-diphosphate + uracil. The protein operates within pyrimidine metabolism; UMP biosynthesis via salvage pathway; UMP from uracil: step 1/1. With respect to regulation, allosterically activated by GTP. In terms of biological role, catalyzes the conversion of uracil and 5-phospho-alpha-D-ribose 1-diphosphate (PRPP) to UMP and diphosphate. The protein is Uracil phosphoribosyltransferase of Thermotoga neapolitana (strain ATCC 49049 / DSM 4359 / NBRC 107923 / NS-E).